Here is a 590-residue protein sequence, read N- to C-terminus: DNA primase (590 aa).

Residues cysteine 37–cysteine 61 form a CHC2-type zinc finger. Residues glycine 255 to proline 337 form the Toprim domain. Positions 261, 305, and 307 each coordinate Mg(2+).

Belongs to the DnaG primase family. As to quaternary structure, monomer. Interacts with DnaB. The cofactor is Zn(2+). Requires Mg(2+) as cofactor.

The catalysed reaction is ssDNA + n NTP = ssDNA/pppN(pN)n-1 hybrid + (n-1) diphosphate.. In terms of biological role, RNA polymerase that catalyzes the synthesis of short RNA molecules used as primers for DNA polymerase during DNA replication. The protein is DNA primase of Neisseria meningitidis serogroup B (strain ATCC BAA-335 / MC58).